A 463-amino-acid chain; its full sequence is Matrix remodeling-associated protein 8 (463 aa).

Positions 1 to 19 are cleaved as a signal peptide; it reads MELRAWVLLWRLVLLQSSA. Residues 20–362 are Extracellular-facing; that stretch reads VLLSSGPSGP…PEGRAHFFQQ (343 aa). Ig-like V-type domains follow at residues 29 to 173 and 176 to 308; these read PATS…LEVT and PRAA…LRVT. Intrachain disulfides connect C54–C153 and C202–C288. N-linked (GlcNAc...) asparagine glycosylation is present at N135. S244 is modified (phosphoserine). An RGD motif is present at residues 268–270; that stretch reads RGD. The interval 309–341 is disordered; it reads EPAARPPPPPRDSPGNGSSHSGAPGPGARDPTL. Over residues 321–335 the composition is skewed to low complexity; that stretch reads SPGNGSSHSGAPGPG. Residue N324 is glycosylated (N-linked (GlcNAc...) asparagine). The helical transmembrane segment at 363 to 383 threads the bilayer; it reads LGYVLATLLLFILLLITVVLA. The Cytoplasmic segment spans residues 384 to 463; the sequence is TRQRRRGGYE…DKEFRKEYCK (80 aa).

In terms of assembly, homodimer in cis. Does not appear to form trans-homodimers. Interacts with ITGB3; the interaction inhibits ITGAV:ITGB3 heterodimer formation.

It is found in the cell membrane. It localises to the cell junction. The protein localises to the tight junction. The protein resides in the cytoplasm. Its subcellular location is the cell projection. It is found in the cilium membrane. It localises to the nucleus. Transmembrane protein which can modulate activity of various signaling pathways, probably via binding to integrin ITGAV:ITGB3. Mediates heterophilic cell-cell interactions in vitro. Inhibits osteoclastogenesis downstream of TNFSF11/RANKL and CSF1, where it may function by attenuating signaling via integrin ITGB3 and MAP kinase p38. Plays a role in cartilage formation where it promotes proliferation and maturation of growth plate chondrocytes. Stimulates formation of primary cilia in chondrocytes. Enhances expression of genes involved in the hedgehog signaling pathway in chondrocytes, including the hedgehog signaling molecule IHH; may also promote signaling via the PTHLH/PTHrP pathway. Plays a role in angiogenesis where it suppresses migration of endothelial cells and also promotes their apoptosis. Inhibits VEGF-induced activation of AKT and p38 MAP kinase in endothelial cells. Also inhibits VTN (vitronectin)-mediated integrin ITGAV:ITGB3 signaling and activation of PTK2/FAK. May play a role in the maturation and maintenance of the blood-brain barrier. This Bos taurus (Bovine) protein is Matrix remodeling-associated protein 8 (MXRA8).